The chain runs to 380 residues: Chaperone protein DnaJ (380 aa).

The region spanning 5–70 (DFYDVLGVNR…QKRAAYDQYG (66 aa)) is the J domain. The segment at 139–217 (GCEKQIRIPT…CHGAGRVKSQ (79 aa)) adopts a CR-type zinc-finger fold. Residues Cys152, Cys155, Cys169, Cys172, Cys191, Cys194, Cys205, and Cys208 each contribute to the Zn(2+) site. CXXCXGXG motif repeat units lie at residues 152–159 (CSHCHGSG), 169–176 (CPTCGGAG), 191–198 (CPTCHGSG), and 205–212 (CNICHGAG).

Belongs to the DnaJ family. In terms of assembly, homodimer. The cofactor is Zn(2+).

The protein resides in the cytoplasm. Functionally, participates actively in the response to hyperosmotic and heat shock by preventing the aggregation of stress-denatured proteins and by disaggregating proteins, also in an autonomous, DnaK-independent fashion. Unfolded proteins bind initially to DnaJ; upon interaction with the DnaJ-bound protein, DnaK hydrolyzes its bound ATP, resulting in the formation of a stable complex. GrpE releases ADP from DnaK; ATP binding to DnaK triggers the release of the substrate protein, thus completing the reaction cycle. Several rounds of ATP-dependent interactions between DnaJ, DnaK and GrpE are required for fully efficient folding. Also involved, together with DnaK and GrpE, in the DNA replication of plasmids through activation of initiation proteins. The sequence is that of Chaperone protein DnaJ from Laribacter hongkongensis (strain HLHK9).